Here is a 296-residue protein sequence, read N- to C-terminus: Enoyl-CoA hydratase domain-containing protein 2, mitochondrial (296 aa).

Residues 1-17 (MLRVLPRALRLPCSWRF) constitute a mitochondrion transit peptide. At Lys101 the chain carries N6-acetyllysine; alternate. Lys101 carries the N6-succinyllysine; alternate modification.

The protein belongs to the enoyl-CoA hydratase/isomerase family.

The protein localises to the mitochondrion. This chain is Enoyl-CoA hydratase domain-containing protein 2, mitochondrial (Echdc2), found in Mus musculus (Mouse).